Consider the following 445-residue polypeptide: Squalene synthase (445 aa).

The next 2 helical transmembrane spans lie at 291 to 311 (STFTFCAIPQVMAIATLDLVY) and 405 to 425 (LIVCLAVIFSMSGLMAYIAYV).

The protein belongs to the phytoene/squalene synthase family. Mg(2+) serves as cofactor.

Its subcellular location is the endoplasmic reticulum membrane. The catalysed reaction is 2 (2E,6E)-farnesyl diphosphate + NADPH + H(+) = squalene + 2 diphosphate + NADP(+). It catalyses the reaction 2 (2E,6E)-farnesyl diphosphate + NADH + H(+) = squalene + 2 diphosphate + NAD(+). Its pathway is terpene metabolism; lanosterol biosynthesis; lanosterol from farnesyl diphosphate: step 1/3. Functionally, catalyzes the condensation of 2 two farnesyl pyrophosphate moieties to form squalene. It is the first committed enzyme of the sterol biosynthesis pathway. Required for the biosynthesis of ergosterol. The protein is Squalene synthase (SQS1) of Yarrowia lipolytica (strain CLIB 122 / E 150) (Yeast).